Reading from the N-terminus, the 159-residue chain is Protein-export protein SecB (159 aa).

This sequence belongs to the SecB family. Homotetramer, a dimer of dimers. One homotetramer interacts with 1 SecA dimer.

It localises to the cytoplasm. In terms of biological role, one of the proteins required for the normal export of preproteins out of the cell cytoplasm. It is a molecular chaperone that binds to a subset of precursor proteins, maintaining them in a translocation-competent state. It also specifically binds to its receptor SecA. The protein is Protein-export protein SecB of Nitrobacter hamburgensis (strain DSM 10229 / NCIMB 13809 / X14).